Consider the following 24-residue polypeptide: Heat shock 70 kDa protein 4L (24 aa).

Thr-19 is subject to Phosphothreonine.

It belongs to the heat shock protein 70 family. Homodimer. In the testis, forms a complex with p53 at 32.5 degrees Celsius which is scrotal temperature but not at 37 or 42 degrees Celsius. As to expression, expressed at high levels in testis and at much lower levels in brain. In testis, expressed mainly in germ cells. Widespread in brain with highest expression in cerebellum and medulla oblongata. Also expressed in renal medulla of water-restricted animals.

The protein resides in the cytoplasm. It localises to the nucleus. Possesses chaperone activity in vitro where it inhibits aggregation of citrate synthase. This is Heat shock 70 kDa protein 4L (Hspa4l) from Rattus norvegicus (Rat).